The chain runs to 99 residues: Small ribosomal subunit protein eS24 (99 aa).

This sequence belongs to the eukaryotic ribosomal protein eS24 family.

The polypeptide is Small ribosomal subunit protein eS24 (Pyrococcus abyssi (strain GE5 / Orsay)).